A 338-amino-acid chain; its full sequence is NADPH dehydrogenase (338 aa).

23–26 (SPMC) lines the FMN pocket. A substrate-binding site is contributed by Tyr28. FMN-binding residues include Ala60 and Gln102. 164–167 (HAAH) contributes to the substrate binding site. FMN-binding positions include Arg215 and 307–308 (GR).

Belongs to the NADH:flavin oxidoreductase/NADH oxidase family. NamA subfamily. In terms of assembly, homotetramer. Composed of a dimer of active dimers. Requires FMN as cofactor.

It catalyses the reaction A + NADPH + H(+) = AH2 + NADP(+). Its activity is regulated as follows. Inhibited by p-hydroxybenzaldehyde (pHBA) and p-nitrophenol (pNP). In terms of biological role, catalyzes the reduction of the double bond of an array of alpha,beta-unsaturated aldehydes and ketones. It also reduces the nitro group of nitroester and nitroaromatic compounds. It could have a role in detoxification processes. The polypeptide is NADPH dehydrogenase (namA) (Bacillus subtilis (strain 168)).